A 234-amino-acid polypeptide reads, in one-letter code: Small ribosomal subunit protein uS3 (234 aa).

In terms of domain architecture, KH type-2 spans 39–107 (IRKFLKKELY…EVSINIKEVK (69 aa)).

Belongs to the universal ribosomal protein uS3 family. As to quaternary structure, part of the 30S ribosomal subunit. Forms a tight complex with proteins S10 and S14.

Functionally, binds the lower part of the 30S subunit head. Binds mRNA in the 70S ribosome, positioning it for translation. This chain is Small ribosomal subunit protein uS3, found in Helicobacter pylori (strain J99 / ATCC 700824) (Campylobacter pylori J99).